We begin with the raw amino-acid sequence, 238 residues long: MTDTAENQTQNNWQAEHPRSIRSFVLRQSHMTAAQQRAIDTLWDSFGIDYQATPADLDANFGSNRPKILEIGFGMGTATAEIARRLPETDFLAIDVHGPGVGNLLKLINENHLENIRVMRHDAVEVIENMLQDGSLDGIHIFFPDPWHKKRHHKRRLIQAPFIAKLLPKLKTGGYIHLATDWEEYARQMLEVLSSFDSLQNTAADYAPTPDYRPETKFEARGKRLGHGVWDLVFKRMG.

Residues Glu-70, Asp-95, Asp-122, and Asp-145 each contribute to the S-adenosyl-L-methionine site. Asp-145 is an active-site residue. Residues Lys-149, Asp-181, and Thr-216–Glu-219 contribute to the substrate site.

This sequence belongs to the class I-like SAM-binding methyltransferase superfamily. TrmB family.

It catalyses the reaction guanosine(46) in tRNA + S-adenosyl-L-methionine = N(7)-methylguanosine(46) in tRNA + S-adenosyl-L-homocysteine. The protein operates within tRNA modification; N(7)-methylguanine-tRNA biosynthesis. In terms of biological role, catalyzes the formation of N(7)-methylguanine at position 46 (m7G46) in tRNA. This is tRNA (guanine-N(7)-)-methyltransferase from Neisseria meningitidis serogroup C / serotype 2a (strain ATCC 700532 / DSM 15464 / FAM18).